Here is a 1058-residue protein sequence, read N- to C-terminus: Carbamoyl phosphate synthase large chain (1058 aa).

The tract at residues 1-401 (MAKRTDIKKI…CLLKACRSLE (401 aa)) is carboxyphosphate synthetic domain. Residues Arg-129, Arg-169, Gly-175, Gly-176, Arg-208, Ile-210, Glu-215, Gly-241, Ile-242, His-243, Gln-284, and Glu-298 each contribute to the ATP site. One can recognise an ATP-grasp 1 domain in the interval 133 to 327 (KQLMKELGEP…IAKIAAKIAV (195 aa)). 3 residues coordinate Mg(2+): Gln-284, Glu-298, and Asn-300. Mn(2+) contacts are provided by Gln-284, Glu-298, and Asn-300. The interval 402 to 546 (IGVHHNELKG…YSTYEWENES (145 aa)) is oligomerization domain. The carbamoyl phosphate synthetic domain stretch occupies residues 547–929 (IKSEKESVIV…ALYKAFEASY (383 aa)). Residues 671–861 (EKALKELGIP…MAQVATKLIL (191 aa)) form the ATP-grasp 2 domain. 10 residues coordinate ATP: Arg-707, Ser-746, Ile-748, Glu-752, Gly-777, Val-778, His-779, Ser-780, Gln-820, and Glu-832. Gln-820, Glu-832, and Asn-834 together coordinate Mg(2+). Mn(2+) is bound by residues Gln-820, Glu-832, and Asn-834. An MGS-like domain is found at 930–1058 (LHMPEYGTIV…ESRTFSIEAI (129 aa)). Positions 930–1058 (LHMPEYGTIV…ESRTFSIEAI (129 aa)) are allosteric domain.

The protein belongs to the CarB family. As to quaternary structure, composed of two chains; the small (or glutamine) chain promotes the hydrolysis of glutamine to ammonia, which is used by the large (or ammonia) chain to synthesize carbamoyl phosphate. Tetramer of heterodimers (alpha,beta)4. Requires Mg(2+) as cofactor. The cofactor is Mn(2+).

It carries out the reaction hydrogencarbonate + L-glutamine + 2 ATP + H2O = carbamoyl phosphate + L-glutamate + 2 ADP + phosphate + 2 H(+). The enzyme catalyses hydrogencarbonate + NH4(+) + 2 ATP = carbamoyl phosphate + 2 ADP + phosphate + 2 H(+). Its pathway is amino-acid biosynthesis; L-arginine biosynthesis; carbamoyl phosphate from bicarbonate: step 1/1. It functions in the pathway pyrimidine metabolism; UMP biosynthesis via de novo pathway; (S)-dihydroorotate from bicarbonate: step 1/3. Large subunit of the glutamine-dependent carbamoyl phosphate synthetase (CPSase). CPSase catalyzes the formation of carbamoyl phosphate from the ammonia moiety of glutamine, carbonate, and phosphate donated by ATP, constituting the first step of 2 biosynthetic pathways, one leading to arginine and/or urea and the other to pyrimidine nucleotides. The large subunit (synthetase) binds the substrates ammonia (free or transferred from glutamine from the small subunit), hydrogencarbonate and ATP and carries out an ATP-coupled ligase reaction, activating hydrogencarbonate by forming carboxy phosphate which reacts with ammonia to form carbamoyl phosphate. This chain is Carbamoyl phosphate synthase large chain, found in Streptococcus equi subsp. equi (strain 4047).